The following is a 590-amino-acid chain: Aspartate--tRNA(Asp/Asn) ligase (590 aa).

Glu175 is an L-aspartate binding site. The segment at 199 to 202 (QQYK) is aspartate. L-aspartate contacts are provided by Arg221 and His450. 221–223 (RDE) lines the ATP pocket. Glu484 is an ATP binding site. Arg491 contributes to the L-aspartate binding site. 536–539 (GVDR) serves as a coordination point for ATP.

The protein belongs to the class-II aminoacyl-tRNA synthetase family. Type 1 subfamily. Homodimer.

It is found in the cytoplasm. It catalyses the reaction tRNA(Asx) + L-aspartate + ATP = L-aspartyl-tRNA(Asx) + AMP + diphosphate. Aspartyl-tRNA synthetase with relaxed tRNA specificity since it is able to aspartylate not only its cognate tRNA(Asp) but also tRNA(Asn). Reaction proceeds in two steps: L-aspartate is first activated by ATP to form Asp-AMP and then transferred to the acceptor end of tRNA(Asp/Asn). This chain is Aspartate--tRNA(Asp/Asn) ligase, found in Bradyrhizobium sp. (strain BTAi1 / ATCC BAA-1182).